The sequence spans 113 residues: U11-theraphotoxin-Hhn1e (113 aa).

An N-terminal signal peptide occupies residues 1 to 21 (MNTVRVTFLLVFVLAVSLGQA). The propeptide occupies 22 to 74 (DKDENRMEMLEKTEQGKSYLDFAENLLLQKLEELEARLLEEDSEESRNSRQKR). The span at 60–69 (LEEDSEESRN) shows a compositional bias: basic and acidic residues. Residues 60–87 (LEEDSEESRNSRQKRCIGEGVPRDENDP) form a disordered region. Cystine bridges form between C75-C90 and C89-C110.

The protein belongs to the neurotoxin 14 (magi-1) family. 01 (HNTX-16) subfamily. As to expression, expressed by the venom gland.

The protein resides in the secreted. In terms of biological role, probable ion channel inhibitor. This is U11-theraphotoxin-Hhn1e from Cyriopagopus hainanus (Chinese bird spider).